Consider the following 204-residue polypeptide: Recombination protein RecR (204 aa).

A C4-type zinc finger spans residues 58-75 (CSICQNITDLGTDPCLLC). In terms of domain architecture, Toprim spans 83-181 (SVICVVESPT…NVTRIARGIP (99 aa)).

Belongs to the RecR family.

May play a role in DNA repair. It seems to be involved in an RecBC-independent recombinational process of DNA repair. It may act with RecF and RecO. The polypeptide is Recombination protein RecR (Chlorobaculum parvum (strain DSM 263 / NCIMB 8327) (Chlorobium vibrioforme subsp. thiosulfatophilum)).